The sequence spans 505 residues: L-carnitine/gamma-butyrobetaine antiporter (505 aa).

The next 12 helical transmembrane spans lie at 10–30 (IEPKVFFPPLIIVGILCWLTV), 50–70 (IWGWAFEWYMVVMLIGWFWLV), 92–112 (IFMMFASCTSAAVLFWGSIEI), 143–163 (GPLPWATYSFLSVAFAYFFFV), 195–215 (FYLVALIFAMGTSLGLATPLV), 231–251 (LDAIIITCWIILNAICVACGL), 263–283 (SYLSFLMLGWVFIVSGASFIM), 316–336 (WTVFYWAWWVIYAIQMSIFLA), 347–367 (LCFGMVLGLTASTWILWTVLG), 403–423 (LSTATMWGFFILCFIATVTLI), 446–466 (LLVRIGWSVLVGIIGIVLLAL), and 475–495 (AIIAGGCPLFFVNIMVTLSFI).

This sequence belongs to the BCCT transporter (TC 2.A.15) family. CaiT subfamily. Homotrimer.

It localises to the cell inner membrane. It carries out the reaction 4-(trimethylamino)butanoate(in) + (R)-carnitine(out) = 4-(trimethylamino)butanoate(out) + (R)-carnitine(in). It participates in amine and polyamine metabolism; carnitine metabolism. Functionally, catalyzes the exchange of L-carnitine for gamma-butyrobetaine. The protein is L-carnitine/gamma-butyrobetaine antiporter of Salmonella arizonae (strain ATCC BAA-731 / CDC346-86 / RSK2980).